The primary structure comprises 157 residues: Glucosamine 6-phosphate N-acetyltransferase 1 (157 aa).

In terms of domain architecture, N-acetyltransferase spans 9 to 157 (ISFRPLDIDD…SIYLPTPPKL (149 aa)). Substrate contacts are provided by residues threonine 31, 78-81 (KFIR), and 90-92 (EDI). 100–105 (GKNLGL) is an acetyl-CoA binding site. Residue 121–122 (YK) participates in substrate binding. Position 135–137 (135–137 (YEK)) interacts with acetyl-CoA.

Belongs to the acetyltransferase family. GNA1 subfamily.

It catalyses the reaction D-glucosamine 6-phosphate + acetyl-CoA = N-acetyl-D-glucosamine 6-phosphate + CoA + H(+). Its pathway is nucleotide-sugar biosynthesis; UDP-N-acetyl-alpha-D-glucosamine biosynthesis; N-acetyl-alpha-D-glucosamine 1-phosphate from alpha-D-glucosamine 6-phosphate (route I): step 1/2. This Dictyostelium discoideum (Social amoeba) protein is Glucosamine 6-phosphate N-acetyltransferase 1 (gna1).